The sequence spans 193 residues: Zinc finger protein AZF3 (193 aa).

C2H2-type zinc fingers lie at residues Y75–H97 and H118–H140.

As to expression, expressed in roots.

Its subcellular location is the nucleus. Transcriptional repressor probably involved in abiotic stress responses. Binds DNA in a sequence-specific manner and can repress the transactivation activity of other transcription factors. This is Zinc finger protein AZF3 (AZF3) from Arabidopsis thaliana (Mouse-ear cress).